The following is a 565-amino-acid chain: Sulfite reductase [NADPH] hemoprotein beta-component (565 aa).

[4Fe-4S] cluster contacts are provided by Cys-429, Cys-435, Cys-474, and Cys-478. Residue Cys-478 participates in siroheme binding.

The protein belongs to the nitrite and sulfite reductase 4Fe-4S domain family. Alpha(8)-beta(8). The alpha component is a flavoprotein, the beta component is a hemoprotein. Requires siroheme as cofactor. It depends on [4Fe-4S] cluster as a cofactor.

It carries out the reaction hydrogen sulfide + 3 NADP(+) + 3 H2O = sulfite + 3 NADPH + 4 H(+). It participates in sulfur metabolism; hydrogen sulfide biosynthesis; hydrogen sulfide from sulfite (NADPH route): step 1/1. In terms of biological role, component of the sulfite reductase complex that catalyzes the 6-electron reduction of sulfite to sulfide. This is one of several activities required for the biosynthesis of L-cysteine from sulfate. The polypeptide is Sulfite reductase [NADPH] hemoprotein beta-component (Shewanella piezotolerans (strain WP3 / JCM 13877)).